The following is a 725-amino-acid chain: Polyribonucleotide nucleotidyltransferase (725 aa).

Mg(2+)-binding residues include D487 and D493. One can recognise a KH domain in the interval P554–I613. Residues G623–K691 form the S1 motif domain. The disordered stretch occupies residues T697 to E725. Residues I701–A719 show a composition bias toward basic and acidic residues.

It belongs to the polyribonucleotide nucleotidyltransferase family. Mg(2+) serves as cofactor.

It localises to the cytoplasm. The catalysed reaction is RNA(n+1) + phosphate = RNA(n) + a ribonucleoside 5'-diphosphate. Functionally, involved in mRNA degradation. Catalyzes the phosphorolysis of single-stranded polyribonucleotides processively in the 3'- to 5'-direction. The chain is Polyribonucleotide nucleotidyltransferase from Methylobacterium nodulans (strain LMG 21967 / CNCM I-2342 / ORS 2060).